The chain runs to 757 residues: Xaa-Pro dipeptidyl-peptidase (757 aa).

Catalysis depends on charge relay system residues serine 348, aspartate 468, and histidine 498.

The protein belongs to the peptidase S15 family. Homodimer.

It is found in the cytoplasm. The catalysed reaction is Hydrolyzes Xaa-Pro-|- bonds to release unblocked, N-terminal dipeptides from substrates including Ala-Pro-|-p-nitroanilide and (sequentially) Tyr-Pro-|-Phe-Pro-|-Gly-Pro-|-Ile.. In terms of biological role, removes N-terminal dipeptides sequentially from polypeptides having unsubstituted N-termini provided that the penultimate residue is proline. This is Xaa-Pro dipeptidyl-peptidase from Streptococcus pneumoniae (strain ATCC BAA-255 / R6).